Reading from the N-terminus, the 388-residue chain is Leucine aminopeptidase 1 (388 aa).

An N-terminal signal peptide occupies residues 1 to 19 (MKVLTAIALSAIAFTGAVA). A propeptide spanning residues 20–88 (AVITQEAFLN…YPTLHSASYV (69 aa)) is cleaved from the precursor. N-linked (GlcNAc...) asparagine glycosylation is found at Asn106 and Asn180. Zn(2+) is bound by residues His188 and Asp207. Asn232 carries an N-linked (GlcNAc...) asparagine glycan. Residues Glu246 and Asp273 each coordinate Zn(2+). Residues Cys322 and Cys326 are joined by a disulfide bond. A Zn(2+)-binding site is contributed by His355.

This sequence belongs to the peptidase M28 family. M28E subfamily. In terms of assembly, monomer. Requires Zn(2+) as cofactor.

It is found in the secreted. In terms of biological role, extracellular aminopeptidase that allows assimilation of proteinaceous substrates and which contributes to pathogenicity. In Aspergillus fumigatus (strain CBS 144.89 / FGSC A1163 / CEA10) (Neosartorya fumigata), this protein is Leucine aminopeptidase 1 (lap1).